The chain runs to 259 residues: Deoxyribose-phosphate aldolase (259 aa).

Aspartate 102 functions as the Proton donor/acceptor in the catalytic mechanism. Lysine 167 functions as the Schiff-base intermediate with acetaldehyde in the catalytic mechanism. Lysine 201 acts as the Proton donor/acceptor in catalysis.

This sequence belongs to the DeoC/FbaB aldolase family. DeoC type 2 subfamily.

It is found in the cytoplasm. The catalysed reaction is 2-deoxy-D-ribose 5-phosphate = D-glyceraldehyde 3-phosphate + acetaldehyde. It functions in the pathway carbohydrate degradation; 2-deoxy-D-ribose 1-phosphate degradation; D-glyceraldehyde 3-phosphate and acetaldehyde from 2-deoxy-alpha-D-ribose 1-phosphate: step 2/2. Catalyzes a reversible aldol reaction between acetaldehyde and D-glyceraldehyde 3-phosphate to generate 2-deoxy-D-ribose 5-phosphate. The sequence is that of Deoxyribose-phosphate aldolase from Escherichia coli O1:K1 / APEC.